We begin with the raw amino-acid sequence, 302 residues long: D-alanine--D-alanine ligase (302 aa).

Residues 99 to 298 (KRLFVAEGIP…FEQLIQRIID (200 aa)) enclose the ATP-grasp domain. 128–183 (LAALGSPVVVKPADGGSTVGVTIAREAGHLPEAVRLALQYSPQVLIEQYIPGQEIT) lines the ATP pocket. Asp252, Glu265, and Asn267 together coordinate Mg(2+).

It belongs to the D-alanine--D-alanine ligase family. Mg(2+) serves as cofactor. The cofactor is Mn(2+).

The protein resides in the cytoplasm. The enzyme catalyses 2 D-alanine + ATP = D-alanyl-D-alanine + ADP + phosphate + H(+). The protein operates within cell wall biogenesis; peptidoglycan biosynthesis. In terms of biological role, cell wall formation. The sequence is that of D-alanine--D-alanine ligase from Gloeobacter violaceus (strain ATCC 29082 / PCC 7421).